The chain runs to 534 residues: Beta-glucosidase 32 (534 aa).

An N-terminal signal peptide occupies residues 1–22 (MAIKLIALVITICVASWDSAQG). Residue Gln-51 participates in a beta-D-glucoside binding. Asn-68 is a glycosylation site (N-linked (GlcNAc...) asparagine). Residues His-154 and 199–200 (NE) each bind a beta-D-glucoside. Residue Glu-200 is the Proton donor of the active site. Cys-219 and Cys-227 are oxidised to a cystine. Position 344 (Tyr-344) interacts with a beta-D-glucoside. N-linked (GlcNAc...) asparagine glycosylation occurs at Asn-374. Glu-417 serves as a coordination point for a beta-D-glucoside. Glu-417 serves as the catalytic Nucleophile. The N-linked (GlcNAc...) asparagine glycan is linked to Asn-425. A beta-D-glucoside contacts are provided by residues Trp-467, 474-475 (EW), and Phe-483.

The protein belongs to the glycosyl hydrolase 1 family.

It catalyses the reaction Hydrolysis of terminal, non-reducing beta-D-glucosyl residues with release of beta-D-glucose.. This chain is Beta-glucosidase 32, found in Arabidopsis thaliana (Mouse-ear cress).